We begin with the raw amino-acid sequence, 85 residues long: UPF0386 protein RHE_CH01859 (85 aa).

Belongs to the UPF0386 family.

The chain is UPF0386 protein RHE_CH01859 from Rhizobium etli (strain ATCC 51251 / DSM 11541 / JCM 21823 / NBRC 15573 / CFN 42).